Consider the following 376-residue polypeptide: Drebrin-like protein B (376 aa).

One can recognise an ADF-H domain in the interval 2-133 (SVNLSKNGAA…EPESIMEKVA (132 aa)). Positions 175 to 231 (KENFWAKAEKDEEERRIEEHRRANVEKDRLERERKEREQREAEERERRFRERSKEID) form a coiled coil. The span at 202-242 (DRLERERKEREQREAEERERRFRERSKEIDGHRKQQEEVEK) shows a compositional bias: basic and acidic residues. The disordered stretch occupies residues 202–288 (DRLERERKER…FTASQQEEEN (87 aa)). Residues 268-283 (ESGSVSAQPEQFTASQ) are compositionally biased toward polar residues. The SH3 domain occupies 317 to 376 (DSGMCARALYDYQAADDTEISFDPDDVIIQIEMIDDGWWRGVAPSGHFGMFPANYVELLE).

This sequence belongs to the ABP1 family.

It is found in the cytoplasm. The protein resides in the cytoskeleton. Its subcellular location is the cell projection. It localises to the lamellipodium. The protein localises to the ruffle. It is found in the cell cortex. The protein resides in the cytosol. Its subcellular location is the synapse. It localises to the perikaryon. The protein localises to the neuron projection. It is found in the cell membrane. The protein resides in the cytoplasmic vesicle. Its subcellular location is the clathrin-coated vesicle membrane. It localises to the golgi apparatus membrane. The protein localises to the podosome. It is found in the early endosome. The protein resides in the dendrite. Its subcellular location is the postsynaptic density. In terms of biological role, adapter protein that binds F-actin and dynamin, and thereby plays a role in receptor-mediated endocytosis. Plays a role in the reorganization of the actin cytoskeleton, formation of cell projections, such as neurites, in neuron morphogenesis and synapse formation. Does not bind G-actin and promote actin polymerization by itself, but excerts its functions by interaction with other proteins. Required for the formation of organized podosome rosettes. This is Drebrin-like protein B (dbnl-b) from Xenopus laevis (African clawed frog).